Consider the following 1418-residue polypeptide: Ankyrin repeat and fibronectin type-III domain-containing protein 1 (1418 aa).

The tract at residues 119–236 is disordered; sequence RDSVCSLPPP…DRGETPSLSE (118 aa). The span at 144 to 154 shows a compositional bias: polar residues; sequence PENTSINLSQC. A compositionally biased stretch (low complexity) spans 171–186; sequence SASPTSSTPLRTTSTP. Basic and acidic residues predominate over residues 223–236; the sequence is LRDHDRGETPSLSE. ANK repeat units follow at residues 419–450 and 456–485; these read QSSEALFEAVEQQDLDAVQILLFQYTADELDL and EGLTPLDISIMTNNVPIAKLLLKAGGKESP. In terms of domain architecture, Fibronectin type-III spans 556-652; that stretch reads APLMVRLSVT…LSQPPSAVPS (97 aa). Residues 893 to 900 are highly conserved peptide sequence; the sequence is GLYLGYLK. 3 disordered regions span residues 1134 to 1179, 1321 to 1343, and 1361 to 1418; these read VQKN…EVFL, LETPLSIPHSPTTSYSLDEYRQP, and KTSP…SSTL. Residues 1136-1146 show a composition bias toward polar residues; that stretch reads KNDSTSSNTDY. The segment covering 1407-1418 has biased composition (polar residues); that stretch reads NEQVSEILSSTL.

Required for vestibular-related functions. The polypeptide is Ankyrin repeat and fibronectin type-III domain-containing protein 1 (ankfn1) (Danio rerio (Zebrafish)).